The sequence spans 82 residues: Three-finger toxin MicTx3 (82 aa).

Residues 1–21 (MKTLLLTLVVVTIMCLDLGYT) form the signal peptide. Cystine bridges form between cysteine 24/cysteine 44, cysteine 38/cysteine 59, cysteine 63/cysteine 74, and cysteine 75/cysteine 80.

This sequence belongs to the three-finger toxin family. Short-chain subfamily. As to expression, expressed by the venom gland.

The protein localises to the secreted. Its function is as follows. Has been described to inhibit nicotinic acetylcholine receptor (nAChR) alpha-7/CHRNA7 subunits and to bind acetylcholine binding protein (AChBP) (Kd=29.5 nM). This chain is Three-finger toxin MicTx3, found in Micrurus corallinus (Brazilian coral snake).